A 449-amino-acid chain; its full sequence is Sensor protein QseC (449 aa).

Over 1–12 (MKLTQRLSLRVR) the chain is Cytoplasmic. A helical membrane pass occupies residues 13–33 (LTLIFLILVSITWAISSFVAW). The Periplasmic segment spans residues 34-161 (RKTTDNVDEL…REDMALAIVA (128 aa)). Residues 162-182 (AQLTPWLIALPFMLLILLLLL) traverse the membrane as a helical segment. Residues 183 to 235 (HRELRPLKKLAQALRFRSPESETPLDAKGVPSEVRPLVEALNQLFSRIHSMMV) form the HAMP domain. At 183 to 449 (HRELRPLKKL…EGGFEAVVSW (267 aa)) the chain is on the cytoplasmic side. Positions 243–449 (DAAHELRSPL…EGGFEAVVSW (207 aa)) constitute a Histidine kinase domain. At histidine 246 the chain carries Phosphohistidine; by autocatalysis.

Its subcellular location is the cell inner membrane. It catalyses the reaction ATP + protein L-histidine = ADP + protein N-phospho-L-histidine.. Member of a two-component regulatory system QseB/QseC. Activates the flagella regulon by activating transcription of FlhDC. May activate QseB by phosphorylation. The chain is Sensor protein QseC (qseC) from Salmonella typhimurium (strain LT2 / SGSC1412 / ATCC 700720).